The sequence spans 445 residues: Histamine H3 receptor (445 aa).

Residues M1–A39 are Extracellular-facing. N-linked (GlcNAc...) asparagine glycosylation is present at N11. Residues L40–V60 traverse the membrane as a helical segment. The Cytoplasmic portion of the chain corresponds to A61 to N70. A helical membrane pass occupies residues F71–Y91. Topologically, residues V92–K108 are extracellular. A disulfide bridge connects residues C107 and C188. A helical transmembrane segment spans residues L109–S129. Over Y130–M156 the chain is Cytoplasmic. The chain crosses the membrane as a helical span at residues A157–L177. Residues S178–W196 are Extracellular-facing. Residues Y197–F217 form a helical membrane-spanning segment. Over N218–S359 the chain is Cytoplasmic. Disordered stretches follow at residues D234–W259 and H273–R336. Residues P241 to P256 show a composition bias toward pro residues. The segment covering A289 to A299 has biased composition (gly residues). Low complexity predominate over residues A300–R312. A helical transmembrane segment spans residues L360–I380. Residues R381–T396 lie on the Extracellular side of the membrane. A helical transmembrane segment spans residues S397–Y417. Topologically, residues S418 to K445 are cytoplasmic. S439 bears the Phosphoserine mark.

Belongs to the G-protein coupled receptor 1 family.

The protein localises to the cell membrane. Its function is as follows. The H3 subclass of histamine receptors could mediate the histamine signals in CNS and peripheral nervous system. Signals through the inhibition of adenylate cyclase and displays high constitutive activity (spontaneous activity in the absence of agonist). The chain is Histamine H3 receptor (Hrh3) from Mus musculus (Mouse).